Here is a 64-residue protein sequence, read N- to C-terminus: MKASELRGKDAAGLNQELSELLKAQFSLRMQKATQQLQNTSQLKKVRKDIARVQTVLTEKANAK.

The protein belongs to the universal ribosomal protein uL29 family.

The chain is Large ribosomal subunit protein uL29 from Cupriavidus metallidurans (strain ATCC 43123 / DSM 2839 / NBRC 102507 / CH34) (Ralstonia metallidurans).